Here is a 118-residue protein sequence, read N- to C-terminus: Integration host factor subunit alpha (118 aa).

The tract at residues 97–118 is disordered; sequence NGAMPMSTEESDENTAQSASGG.

It belongs to the bacterial histone-like protein family. In terms of assembly, heterodimer of an alpha and a beta chain.

Functionally, this protein is one of the two subunits of integration host factor, a specific DNA-binding protein that functions in genetic recombination as well as in transcriptional and translational control. The chain is Integration host factor subunit alpha from Rhodopseudomonas palustris (strain ATCC BAA-98 / CGA009).